A 277-amino-acid chain; its full sequence is Homeobox protein Nkx-6.2 (277 aa).

The segment at 89-142 is repressor domain; that stretch reads AGVYFGPAAAVARGYPKPLAELPGRPPIFWPGVVQGAPWRDPRLAGPAPAGGVL. 2 disordered regions span residues 132–155 and 210–250; these read LAGP…RPTF and EMAS…DDEK. Residues 148 to 207 constitute a DNA-binding region (homeobox); the sequence is KKHSRPTFSGQQIFALEKTFEQTKYLAGPERARLAYSLGMTESQVKVWFQNRRTKWRKRH. Basic and acidic residues predominate over residues 216–226; it reads KKQDSDAEKLK.

As to expression, highest expression in brain.

Its subcellular location is the nucleus. Transcription factor with repressor activity involved in the regulation of axon-glial interactions at myelin paranodes in oligodendrocytes. Binds to the consensus DNA sequence 5'-(A/T)TTAATGA-3'. In oligodendrocytes, binds to MBP and PLP1 promoter regions. The polypeptide is Homeobox protein Nkx-6.2 (NKX6-2) (Homo sapiens (Human)).